Reading from the N-terminus, the 60-residue chain is Large ribosomal subunit protein uL30 (60 aa).

The protein belongs to the universal ribosomal protein uL30 family. As to quaternary structure, part of the 50S ribosomal subunit.

The chain is Large ribosomal subunit protein uL30 from Desulfitobacterium hafniense (strain DSM 10664 / DCB-2).